The sequence spans 253 residues: Triosephosphate isomerase (253 aa).

9–11 (NWK) is a binding site for substrate. His95 serves as the catalytic Electrophile. The active-site Proton acceptor is the Glu167. Substrate contacts are provided by residues Gly173, Ser213, and 234-235 (GG). Phosphoserine is present on Ser213.

The protein belongs to the triosephosphate isomerase family. Homodimer.

The protein resides in the cytoplasm. It catalyses the reaction D-glyceraldehyde 3-phosphate = dihydroxyacetone phosphate. Its pathway is carbohydrate biosynthesis; gluconeogenesis. It functions in the pathway carbohydrate degradation; glycolysis; D-glyceraldehyde 3-phosphate from glycerone phosphate: step 1/1. Its function is as follows. Involved in the gluconeogenesis. Catalyzes stereospecifically the conversion of dihydroxyacetone phosphate (DHAP) to D-glyceraldehyde-3-phosphate (G3P). This chain is Triosephosphate isomerase, found in Bacillus velezensis (strain DSM 23117 / BGSC 10A6 / LMG 26770 / FZB42) (Bacillus amyloliquefaciens subsp. plantarum).